Reading from the N-terminus, the 99-residue chain is DNA-directed RNA polymerase subunit omega (99 aa).

Belongs to the RNA polymerase subunit omega family. In terms of assembly, the RNAP catalytic core consists of 2 alpha, 1 beta, 1 beta' and 1 omega subunit. When a sigma factor is associated with the core the holoenzyme is formed, which can initiate transcription.

It carries out the reaction RNA(n) + a ribonucleoside 5'-triphosphate = RNA(n+1) + diphosphate. Functionally, promotes RNA polymerase assembly. Latches the N- and C-terminal regions of the beta' subunit thereby facilitating its interaction with the beta and alpha subunits. This chain is DNA-directed RNA polymerase subunit omega, found in Xanthomonas axonopodis pv. citri (strain 306).